We begin with the raw amino-acid sequence, 559 residues long: 3-aminoavenalumate diazotase (559 aa).

Position 181 (serine 181) interacts with Mg(2+). The ATP site is built by alanine 227, glycine 332, and serine 336. Mg(2+) is bound at residue glutamate 337. ATP is bound by residues aspartate 416 and arginine 437.

The protein belongs to the ATP-dependent AMP-binding enzyme family. Mg(2+) serves as cofactor.

It carries out the reaction 3-aminoavenalumate + nitrite + ATP = 3-diazoavenalumate + AMP + diphosphate + H2O. The enzyme catalyses (E)-3-aminocoumarate + nitrite + ATP + H(+) = (E)-3-diazocoumarate + AMP + diphosphate + H2O. The catalysed reaction is 3-amino-4-hydroxybenzoate + nitrite + ATP + H(+) = 3-diazo-4-hydroxybenzoate + AMP + diphosphate + H2O. In terms of biological role, ligase involved in the biosynthesis of avenalumic acid (AVA). Catalyzes the diazotization of 3-aminoavenalumic acid (3-AAA) to 3-diazoavenalumic acid (3-DAA). It can also act on 3-aminocoumaric acid (3-ACA) and 3-amino-4-hydroxybenzoic acid (3,4-AHBA) with lower activity. This chain is 3-aminoavenalumate diazotase, found in Streptomyces sp.